The chain runs to 359 residues: MQTLADLLNTIPAIDPAAMSRAQRHIDGLLKPVGSLGRLEALAIQLAGMPGLNGVPHVGKKAVLVMCADHGVWEEGVAISPKEVTAIQAENMTRGTTGVCVLAAQAGANVYVIDVGIDTAEPIPGLINMRVARGSGNIASAPAMSRHLAEKLLLDVICYTRELAKNGVTLFGVGDLGMANTTPAAAIVSTITGRAPEEVVGIGANLPTDKLANKIDVVRRAITLNQPNPQDGVDVLAKVGGFDLVGMAGVMLGAASCGLPVLLDGFLSYAAALAACQMSPAIKPYLIPSHLSAEKGARIALSHLGLEPYLNMEMRLGEGSGAALAMPIIEAACAIYNNMGELAASNIVLPGNTTSDLNS.

Catalysis depends on glutamate 318, which acts as the Proton acceptor.

Belongs to the CobT family. As to quaternary structure, homodimer.

The enzyme catalyses 5,6-dimethylbenzimidazole + nicotinate beta-D-ribonucleotide = alpha-ribazole 5'-phosphate + nicotinate + H(+). It functions in the pathway nucleoside biosynthesis; alpha-ribazole biosynthesis; alpha-ribazole from 5,6-dimethylbenzimidazole: step 1/2. Functionally, catalyzes the synthesis of alpha-ribazole-5'-phosphate from nicotinate mononucleotide (NAMN) and 5,6-dimethylbenzimidazole (DMB). This Shigella sonnei (strain Ss046) protein is Nicotinate-nucleotide--dimethylbenzimidazole phosphoribosyltransferase.